Reading from the N-terminus, the 717-residue chain is CRISPR-associated protein Cas8b (717 aa).

Disordered regions lie at residues 263–283 (IGVFSVKHPDAQPGLRQDQSW) and 698–717 (HEKEDEDDQDTEEPAESTTN). Positions 701 to 717 (EDEDDQDTEEPAESTTN) are enriched in acidic residues.

It is found in the cytoplasm. In terms of biological role, CRISPR (clustered regularly interspaced short palindromic repeat) is an adaptive immune system that provides protection against mobile genetic elements (viruses, transposable elements and conjugative plasmids). CRISPR clusters contain sequences complementary to antecedent mobile elements and target invading nucleic acids. CRISPR clusters are transcribed and processed into CRISPR RNA (crRNA). Plasmid targeted by CRISPR locus P1 transform wild-type cells very poorly. This subunit might be involved in stabilizing crRNA. In Haloferax volcanii (strain ATCC 29605 / DSM 3757 / JCM 8879 / NBRC 14742 / NCIMB 2012 / VKM B-1768 / DS2) (Halobacterium volcanii), this protein is CRISPR-associated protein Cas8b.